Reading from the N-terminus, the 219-residue chain is Dehydration-responsive element-binding protein 1F (219 aa).

A disordered region spans residues methionine 1 to proline 45. A compositionally biased stretch (low complexity) spans serine 7–proline 16. Basic residues predominate over residues glycine 23–glutamate 41. The AP2/ERF DNA-binding region spans valine 46–proline 105. Residues arginine 134–arginine 161 are disordered.

Belongs to the AP2/ERF transcription factor family. ERF subfamily. In terms of tissue distribution, mostly expressed in developing seeds and apices.

Its subcellular location is the nucleus. Functionally, transcriptional activator that binds specifically to the DNA sequence 5'-[AG]CCGAC-3'. Binding to the C-repeat/DRE element mediates high salinity- and dehydration-inducible transcription. The chain is Dehydration-responsive element-binding protein 1F (DREB1F) from Oryza sativa subsp. indica (Rice).